Reading from the N-terminus, the 278-residue chain is Phosphatidylglycerol--prolipoprotein diacylglyceryl transferase (278 aa).

4 helical membrane passes run Trp19–Gly39, Phe49–Val69, Ile86–Ile106, and Met112–Ile132. A 1,2-diacyl-sn-glycero-3-phospho-(1'-sn-glycerol) is bound at residue Arg134. 3 helical membrane passes run Gln174–Leu194, Gly204–Met224, and Ile235–Tyr255.

It belongs to the Lgt family.

The protein resides in the cell membrane. It catalyses the reaction L-cysteinyl-[prolipoprotein] + a 1,2-diacyl-sn-glycero-3-phospho-(1'-sn-glycerol) = an S-1,2-diacyl-sn-glyceryl-L-cysteinyl-[prolipoprotein] + sn-glycerol 1-phosphate + H(+). Its pathway is protein modification; lipoprotein biosynthesis (diacylglyceryl transfer). Functionally, catalyzes the transfer of the diacylglyceryl group from phosphatidylglycerol to the sulfhydryl group of the N-terminal cysteine of a prolipoprotein, the first step in the formation of mature lipoproteins. The protein is Phosphatidylglycerol--prolipoprotein diacylglyceryl transferase of Lactobacillus johnsonii (strain CNCM I-12250 / La1 / NCC 533).